The sequence spans 427 residues: Dihydroorotase (427 aa).

Zn(2+) contacts are provided by His-60 and His-62. Residues His-62 to Arg-64 and Asn-94 contribute to the substrate site. Zn(2+)-binding residues include Asp-152, His-179, and His-232. Asn-278 serves as a coordination point for substrate. Zn(2+) is bound at residue Asp-305. Asp-305 is an active-site residue. Substrate-binding positions include His-309 and Phe-323 to Gly-324.

Belongs to the metallo-dependent hydrolases superfamily. DHOase family. Class I DHOase subfamily. The cofactor is Zn(2+).

It carries out the reaction (S)-dihydroorotate + H2O = N-carbamoyl-L-aspartate + H(+). It functions in the pathway pyrimidine metabolism; UMP biosynthesis via de novo pathway; (S)-dihydroorotate from bicarbonate: step 3/3. Its function is as follows. Catalyzes the reversible cyclization of carbamoyl aspartate to dihydroorotate. In Bacillus caldolyticus, this protein is Dihydroorotase.